We begin with the raw amino-acid sequence, 202 residues long: Large ribosomal subunit protein uL13 (202 aa).

This sequence belongs to the universal ribosomal protein uL13 family. Component of the large ribosomal subunit (LSU). Mature N.crassa ribosomes consist of a small (40S) and a large (60S) subunit. The 40S small subunit contains 1 molecule of ribosomal RNA (18S rRNA) and at least 32 different proteins. The large 60S subunit contains 3 rRNA molecules (26S, 5.8S and 5S rRNA) and at least 42 different proteins.

The protein resides in the cytoplasm. In terms of biological role, component of the ribosome, a large ribonucleoprotein complex responsible for the synthesis of proteins in the cell. The small ribosomal subunit (SSU) binds messenger RNAs (mRNAs) and translates the encoded message by selecting cognate aminoacyl-transfer RNA (tRNA) molecules. The large subunit (LSU) contains the ribosomal catalytic site termed the peptidyl transferase center (PTC), which catalyzes the formation of peptide bonds, thereby polymerizing the amino acids delivered by tRNAs into a polypeptide chain. The nascent polypeptides leave the ribosome through a tunnel in the LSU and interact with protein factors that function in enzymatic processing, targeting, and the membrane insertion of nascent chains at the exit of the ribosomal tunnel. This is Large ribosomal subunit protein uL13 (crp-46) from Neurospora crassa (strain ATCC 24698 / 74-OR23-1A / CBS 708.71 / DSM 1257 / FGSC 987).